Consider the following 421-residue polypeptide: ATP-dependent RNA helicase RhlB (421 aa).

A Q motif motif is present at residues 9–37; it reads QKFSDFALHPQVVEALEKKGFYNCTPIQA. One can recognise a Helicase ATP-binding domain in the interval 40–219; the sequence is LPLTLAGRDV…FEQMNNAEYV (180 aa). 53 to 60 serves as a coordination point for ATP; it reads AQTGTGKT. Residues 165–168 carry the DEAD box motif; sequence DEAD. In terms of domain architecture, Helicase C-terminal spans 245-390; the sequence is RLLQTLIEEE…VSKYNPEALM (146 aa). The segment at 396–421 is disordered; that stretch reads PLRLTRSRPGNGPRRAGAPRNRRRSG. Over residues 402–414 the composition is skewed to low complexity; the sequence is SRPGNGPRRAGAP.

It belongs to the DEAD box helicase family. RhlB subfamily. In terms of assembly, component of the RNA degradosome, which is a multiprotein complex involved in RNA processing and mRNA degradation.

It is found in the cytoplasm. It carries out the reaction ATP + H2O = ADP + phosphate + H(+). In terms of biological role, DEAD-box RNA helicase involved in RNA degradation. Has RNA-dependent ATPase activity and unwinds double-stranded RNA. The chain is ATP-dependent RNA helicase RhlB from Salmonella arizonae (strain ATCC BAA-731 / CDC346-86 / RSK2980).